The chain runs to 287 residues: Cell wall-binding protein YocH (287 aa).

The signal sequence occupies residues 1–25 (MKKTIMSFVAVAALSTTAFGAHASA). 2 consecutive LysM domains span residues 26 to 69 (KEIT…KLTI) and 78 to 121 (GQYT…TLSV). Low complexity predominate over residues 130–143 (TATENAQTNAPQAA). The disordered stretch occupies residues 130-193 (TATENAQTNA…SNTNNQEASK (64 aa)). A compositionally biased stretch (basic and acidic residues) spans 165-181 (QETKAEAETSVNTEEKA). Over residues 182 to 193 (VQSNTNNQEASK) the composition is skewed to polar residues.

The protein localises to the secreted. It localises to the cell wall. This is Cell wall-binding protein YocH (yocH) from Bacillus subtilis (strain 168).